Here is a 339-residue protein sequence, read N- to C-terminus: Biotin synthase (339 aa).

One can recognise a Radical SAM core domain in the interval 55–288 (LSEGALHSCS…GKIIKFAAGR (234 aa)). Residues C73, C77, and C80 each coordinate [4Fe-4S] cluster. [2Fe-2S] cluster is bound by residues C152, C213, and K283.

This sequence belongs to the radical SAM superfamily. Biotin synthase family. Homodimer. The cofactor is [4Fe-4S] cluster. It depends on [2Fe-2S] cluster as a cofactor.

The catalysed reaction is (4R,5S)-dethiobiotin + (sulfur carrier)-SH + 2 reduced [2Fe-2S]-[ferredoxin] + 2 S-adenosyl-L-methionine = (sulfur carrier)-H + biotin + 2 5'-deoxyadenosine + 2 L-methionine + 2 oxidized [2Fe-2S]-[ferredoxin]. The protein operates within cofactor biosynthesis; biotin biosynthesis; biotin from 7,8-diaminononanoate: step 2/2. Functionally, catalyzes the conversion of dethiobiotin (DTB) to biotin by the insertion of a sulfur atom into dethiobiotin via a radical-based mechanism. This is Biotin synthase from Chlorobium phaeobacteroides (strain BS1).